We begin with the raw amino-acid sequence, 608 residues long: Glutamyl-tRNA(Gln) amidotransferase subunit E (608 aa).

Belongs to the GatB/GatE family. GatE subfamily. As to quaternary structure, heterodimer of GatD and GatE.

It catalyses the reaction L-glutamyl-tRNA(Gln) + L-glutamine + ATP + H2O = L-glutaminyl-tRNA(Gln) + L-glutamate + ADP + phosphate + H(+). Functionally, allows the formation of correctly charged Gln-tRNA(Gln) through the transamidation of misacylated Glu-tRNA(Gln) in organisms which lack glutaminyl-tRNA synthetase. The reaction takes place in the presence of glutamine and ATP through an activated gamma-phospho-Glu-tRNA(Gln). The GatDE system is specific for glutamate and does not act on aspartate. In Pyrobaculum aerophilum (strain ATCC 51768 / DSM 7523 / JCM 9630 / CIP 104966 / NBRC 100827 / IM2), this protein is Glutamyl-tRNA(Gln) amidotransferase subunit E.